The primary structure comprises 405 residues: ATP-sensitive inward rectifier potassium channel 15 (405 aa).

Residues 1–90 (MVARWVKGSE…LQDLWTTVID (90 aa)) are Cytoplasmic-facing. Residues 91 to 117 (MKWRYKLTLFAATFVMTWFLFGVVYYA) form a helical membrane-spanning segment. At 118–143 (IAFIHGDLELGESNSNHTPCIMKVDS) the chain is on the extracellular side. The segment at residues 144–160 (LTGAFLFSLESQTTIGY) is an intramembrane region (helical; Pore-forming). A Selectivity filter motif is present at residues 157 to 162 (TIGYGV). Topologically, residues 161 to 169 (GVRSITEEC) are extracellular. Residues 170-195 (PHAIFLLVAQLVITTLIEIFITGTFL) traverse the membrane as a helical segment. Residues 196–405 (AKIARPKKRA…RSLLLQQSNV (210 aa)) lie on the Cytoplasmic side of the membrane.

It belongs to the inward rectifier-type potassium channel (TC 1.A.2.1) family. KCNJ15 subfamily. Can form heteromultimeric channels with Kir5.1/KCNJ16. Interacts with PATJ.

The protein localises to the membrane. Its subcellular location is the cell membrane. The enzyme catalyses K(+)(in) = K(+)(out). With respect to regulation, channel activity is regulated by variations of cytosolic pH; reversibly inhibited by acidic pH values. Inhibited by Ba(2+) and Cs(+) in a voltage-dependent manner. Its function is as follows. Inward rectifier potassium channels are characterized by a greater tendency to allow potassium to flow into the cell rather than out of it. Their voltage dependence is regulated by the concentration of extracellular potassium; as external potassium is raised, the voltage range of the channel opening shifts to more positive voltages. The inward rectification is mainly due to the blockage of outward current by internal magnesium. The protein is ATP-sensitive inward rectifier potassium channel 15 (Kcnj15) of Rattus norvegicus (Rat).